Here is a 691-residue protein sequence, read N- to C-terminus: MIKKTFLVEIGTEELPSNILKKIILVFYKNFVDELSFNKILYKNINYFSTPRRLALQIIELDTSEKINEKIKKGPAIKHAFDENGNPTKAAYYWAKSCKINLNQAERLKTKTGEWIIHRIQEKKEKIELLFPKIIEKILKQINLKNTMRWETTNLRFIRPIRNIVMLLDEKIIKSEVFNVPSNNFLYHHISCKEEKIYIKNAIEYPAVLFKKNKIIANYETRKEKIKYEAKKIAKKVDGIIKTNPFLLEEVTSLVESPQALLARFKKDYINYIPKKILIHTIEKQQRCFSIYSNNSKKEILPYFIFISNIKSKKNKEIILGNEKVMHARLSDAMFFLKQDRKRKLENYLPFLKKVSFYNNLGTLYEKTLRLKLLIESISCYTNTINKNDLIRSAVLSKCDLITQMVDEFPELQGTIGMYYALENKENKEVAIAIKEQYLPSFSGDELPSTPIGCLLSISDKIDTLSGMFAIGETPTPEKDPFGLRRAALGILRIIITKKIPIDLKKIIEISLKIYTFKKVNYSIISKKIIKFFISRLSFFYEKKGYSTKVIKSVLSCKLTEPLDIDKRINAISDLKKIESIILIAKRIDNIVKNNHQIISSEIHVELMKKTEEKNLLKEIKIFNSKTKELFIQKKYKEILVEIKKLEKPIDNFFDKVQINHSNFEIRQNRLLLLIKIQKFFLKIANFSYLY.

The protein belongs to the class-II aminoacyl-tRNA synthetase family. In terms of assembly, tetramer of two alpha and two beta subunits.

The protein resides in the cytoplasm. It carries out the reaction tRNA(Gly) + glycine + ATP = glycyl-tRNA(Gly) + AMP + diphosphate. In Buchnera aphidicola subsp. Schizaphis graminum (strain Sg), this protein is Glycine--tRNA ligase beta subunit.